Here is a 302-residue protein sequence, read N- to C-terminus: HTH-type transcriptional regulator GbpR (302 aa).

The 56-residue stretch at 1–56 (MSHLRMLVMIEEHGQVSAAAAAMNMTQPAASRMLSEMEAIVKSPLCQRASRGVVLT) folds into the HTH lysR-type domain. The segment at residues 16–35 (VSAAAAAMNMTQPAASRMLS) is a DNA-binding region (H-T-H motif).

Belongs to the LysR transcriptional regulatory family.

Functionally, activator of the expression of chvE when bound to its inducer and represses its expression in the absence of inducer (L-arabinose, D-fucose or D-galactose). Negatively regulates its own expression. The sequence is that of HTH-type transcriptional regulator GbpR (gbpR) from Rhizobium radiobacter (Agrobacterium tumefaciens).